A 716-amino-acid chain; its full sequence is Fatty acid oxidation complex subunit alpha (716 aa).

The tract at residues 1-189 (MIYQSPTIQV…KVGAVDAVVA (189 aa)) is enoyl-CoA hydratase/isomerase. D296 provides a ligand contact to substrate. The tract at residues 311-716 (KEVNNAAVLG…AANNGSYYQA (406 aa)) is 3-hydroxyacyl-CoA dehydrogenase. NAD(+) contacts are provided by residues M324, D343, 400–402 (VVE), K407, and S429. Residue H450 is the For 3-hydroxyacyl-CoA dehydrogenase activity of the active site. N453 provides a ligand contact to NAD(+). 2 residues coordinate substrate: N500 and Y660.

In the N-terminal section; belongs to the enoyl-CoA hydratase/isomerase family. The protein in the C-terminal section; belongs to the 3-hydroxyacyl-CoA dehydrogenase family. Heterotetramer of two alpha chains (FadB) and two beta chains (FadA).

The catalysed reaction is a (3S)-3-hydroxyacyl-CoA + NAD(+) = a 3-oxoacyl-CoA + NADH + H(+). The enzyme catalyses a (3S)-3-hydroxyacyl-CoA = a (2E)-enoyl-CoA + H2O. It carries out the reaction a 4-saturated-(3S)-3-hydroxyacyl-CoA = a (3E)-enoyl-CoA + H2O. It catalyses the reaction (3S)-3-hydroxybutanoyl-CoA = (3R)-3-hydroxybutanoyl-CoA. The catalysed reaction is a (3Z)-enoyl-CoA = a 4-saturated (2E)-enoyl-CoA. The enzyme catalyses a (3E)-enoyl-CoA = a 4-saturated (2E)-enoyl-CoA. It participates in lipid metabolism; fatty acid beta-oxidation. Involved in the aerobic and anaerobic degradation of long-chain fatty acids via beta-oxidation cycle. Catalyzes the formation of 3-oxoacyl-CoA from enoyl-CoA via L-3-hydroxyacyl-CoA. It can also use D-3-hydroxyacyl-CoA and cis-3-enoyl-CoA as substrate. The sequence is that of Fatty acid oxidation complex subunit alpha from Shewanella baltica (strain OS223).